We begin with the raw amino-acid sequence, 249 residues long: Small ribosomal subunit protein eS6 (249 aa).

Disordered regions lie at residues 161–181 (PLAK…RLVT) and 194–249 (LKKQ…SSQK). The segment covering 216 to 229 (RSKEAKEKRQEQIA) has biased composition (basic and acidic residues). 5 positions are modified to phosphoserine: Ser235, Ser236, Ser240, Ser244, and Ser247. Positions 236 to 249 (SLRASTSKSESSQK) are enriched in low complexity.

The protein belongs to the eukaryotic ribosomal protein eS6 family. In terms of assembly, component of the small ribosomal subunit. Part of the small subunit (SSU) processome, composed of more than 70 proteins and the RNA chaperone small nucleolar RNA (snoRNA) U3. Post-translationally, ribosomal protein S6 is the major substrate of protein kinases in eukaryote ribosomes. The phosphorylation is stimulated by growth factors, tumor promoting agents, and mitogens. It is dephosphorylated at growth arrest.

It is found in the cytoplasm. It localises to the nucleus. The protein resides in the nucleolus. Functionally, component of the 40S small ribosomal subunit. Plays an important role in controlling cell growth and proliferation through the selective translation of particular classes of mRNA. Part of the small subunit (SSU) processome, first precursor of the small eukaryotic ribosomal subunit. During the assembly of the SSU processome in the nucleolus, many ribosome biogenesis factors, an RNA chaperone and ribosomal proteins associate with the nascent pre-rRNA and work in concert to generate RNA folding, modifications, rearrangements and cleavage as well as targeted degradation of pre-ribosomal RNA by the RNA exosome. This is Small ribosomal subunit protein eS6 (rps6) from Xenopus laevis (African clawed frog).